A 220-amino-acid polypeptide reads, in one-letter code: MAKQEYKQLPKRAEVHSATEQFKDTIKTSLGLDLFKGLGLTIKEFFSPSVTIHYPMEQLPLSPRYRAVHHLQRLLDSGSERCIGCGLCEKICTSNCIRIITHKGEDNRKKIDSYTINLGRCIYCGLCAEVCPELAIVMGNRFENASTQRSQYGSKSEFLTSEQDAKNCSHAEFLGFGAVSPNYNERMQATPLDYVQEPSKEESKEESPTSPESHKGDENV.

4Fe-4S ferredoxin-type domains lie at 71 to 102 and 112 to 141; these read LQRLLDSGSERCIGCGLCEKICTSNCIRIITH and DSYTINLGRCIYCGLCAEVCPELAIVMGNR. Cys82, Cys85, Cys88, Cys92, Cys121, Cys124, Cys127, and Cys131 together coordinate [4Fe-4S] cluster. Residues 187–220 are disordered; it reads MQATPLDYVQEPSKEESKEESPTSPESHKGDENV. Basic and acidic residues predominate over residues 198–220; sequence PSKEESKEESPTSPESHKGDENV.

The protein belongs to the complex I 23 kDa subunit family. As to quaternary structure, NDH-1 is composed of 14 different subunits. Subunits NuoA, H, J, K, L, M, N constitute the membrane sector of the complex. Requires [4Fe-4S] cluster as cofactor.

It is found in the cell inner membrane. The enzyme catalyses a quinone + NADH + 5 H(+)(in) = a quinol + NAD(+) + 4 H(+)(out). Functionally, NDH-1 shuttles electrons from NADH, via FMN and iron-sulfur (Fe-S) centers, to quinones in the respiratory chain. The immediate electron acceptor for the enzyme in this species is believed to be ubiquinone. Couples the redox reaction to proton translocation (for every two electrons transferred, four hydrogen ions are translocated across the cytoplasmic membrane), and thus conserves the redox energy in a proton gradient. This Helicobacter pylori (strain J99 / ATCC 700824) (Campylobacter pylori J99) protein is NADH-quinone oxidoreductase subunit I.